A 349-amino-acid chain; its full sequence is Shematrin-like protein 1 (349 aa).

Positions 1-16 are cleaved as a signal peptide; it reads MLKLVCAVFLIATVSA.

As to expression, prismatic layer of shell (at protein level).

It is found in the secreted. The protein is Shematrin-like protein 1 of Margaritifera margaritifera (Freshwater pearl mussel).